Consider the following 242-residue polypeptide: Myogenic factor 6 (242 aa).

Positions Ser31–Leu63 are disordered. One can recognise a bHLH domain in the interval Asp93 to Leu144.

As to quaternary structure, efficient DNA binding requires dimerization with another bHLH protein.

The protein localises to the nucleus. Functionally, involved in muscle differentiation (myogenic factor). Induces fibroblasts to differentiate into myoblasts. Probable sequence specific DNA-binding protein. This chain is Myogenic factor 6 (MYF6), found in Sus scrofa (Pig).